A 145-amino-acid polypeptide reads, in one-letter code: Large ribosomal subunit protein uL11 (145 aa).

This sequence belongs to the universal ribosomal protein uL11 family. In terms of assembly, part of the ribosomal stalk of the 50S ribosomal subunit. Interacts with L10 and the large rRNA to form the base of the stalk. L10 forms an elongated spine to which L12 dimers bind in a sequential fashion forming a multimeric L10(L12)X complex. In terms of processing, one or more lysine residues are methylated.

Functionally, forms part of the ribosomal stalk which helps the ribosome interact with GTP-bound translation factors. The chain is Large ribosomal subunit protein uL11 from Corynebacterium glutamicum (strain ATCC 13032 / DSM 20300 / JCM 1318 / BCRC 11384 / CCUG 27702 / LMG 3730 / NBRC 12168 / NCIMB 10025 / NRRL B-2784 / 534).